The following is a 299-amino-acid chain: Protease HtpX homolog (299 aa).

The next 2 membrane-spanning stretches (helical) occupy residues 7-24 (GILMAVMTALFLGVGALI) and 29-46 (GAIIALIVAALMNLFTFW). Residue histidine 130 participates in Zn(2+) binding. Glutamate 131 is a catalytic residue. Position 134 (histidine 134) interacts with Zn(2+). The next 2 membrane-spanning stretches (helical) occupy residues 145-165 (VTATFAGAISMLANFAFFFGG) and 174-194 (PVGIVGTLALMILAPLAAGLV). A Zn(2+)-binding site is contributed by glutamate 203.

Belongs to the peptidase M48B family. Zn(2+) is required as a cofactor.

Its subcellular location is the cell inner membrane. The sequence is that of Protease HtpX homolog from Cereibacter sphaeroides (strain ATCC 17025 / ATH 2.4.3) (Rhodobacter sphaeroides).